The sequence spans 77 residues: Phytosulfokines 5 (77 aa).

A signal peptide spans 1–24; sequence MVKFTTFLCIIALLLCSTLTHASA. A propeptide spanning residues 25–68 is cleaved from the precursor; it reads RLNPTSVYPEENSFKKLEQGEVICEGVGEEECFLIRRTLVAHTD. Sulfotyrosine is present on residues Tyr-69 and Tyr-71. Residues 74 to 77 constitute a propeptide that is removed on maturation; it reads NHNP.

Belongs to the phytosulfokine family. Post-translationally, sulfation is important for activity and for the binding to a putative membrane receptor. PSK-beta is an enzymatic derivative of PSK-alpha. Expressed in stems, roots, mature leaves and flowers. Most abundant in vascular bundles.

The protein resides in the secreted. Functionally, promotes plant cell differentiation, organogenesis and somatic embryogenesis as well as cell proliferation. May be involved in the low quiescent center cell proliferation. This Arabidopsis thaliana (Mouse-ear cress) protein is Phytosulfokines 5 (PSK5).